The chain runs to 835 residues: Lon protease (835 aa).

The Lon N-terminal domain maps to 4–224 (LPYIAIRNQL…LAINMLINAI (221 aa)). An ATP-binding site is contributed by 412 to 419 (GPPGTGKT). In terms of domain architecture, Lon proteolytic spans 649-832 (QPKAGVVNAL…DEIFKYIFEA (184 aa)). Catalysis depends on residues Ser-738 and Lys-781.

It belongs to the peptidase S16 family. In terms of assembly, homohexamer. Organized in a ring with a central cavity.

The protein resides in the cytoplasm. The enzyme catalyses Hydrolysis of proteins in presence of ATP.. Functionally, ATP-dependent serine protease that mediates the selective degradation of mutant and abnormal proteins as well as certain short-lived regulatory proteins. Required for cellular homeostasis and for survival from DNA damage and developmental changes induced by stress. Degrades polypeptides processively to yield small peptide fragments that are 5 to 10 amino acids long. Binds to DNA in a double-stranded, site-specific manner. This Metamycoplasma arthritidis (strain 158L3-1) (Mycoplasma arthritidis) protein is Lon protease.